A 213-amino-acid chain; its full sequence is Maleylacetoacetate isomerase (213 aa).

A GST N-terminal domain is found at 3 to 84; that stretch reads NETVLYDYWR…YLAETRDGTG (82 aa). A GST C-terminal domain is found at 89-213; it reads HPIDRQRVRA…QRAHPDRAKP (125 aa).

It belongs to the GST superfamily. Zeta family.

It catalyses the reaction 4-maleylacetoacetate = 4-fumarylacetoacetate. The protein operates within amino-acid degradation; L-phenylalanine degradation; acetoacetate and fumarate from L-phenylalanine: step 5/6. In Rhizobium meliloti (strain 1021) (Ensifer meliloti), this protein is Maleylacetoacetate isomerase (maiA).